The sequence spans 60 residues: Large ribosomal subunit protein bL32 (60 aa).

Belongs to the bacterial ribosomal protein bL32 family.

The protein is Large ribosomal subunit protein bL32 of Hydrogenobaculum sp. (strain Y04AAS1).